A 347-amino-acid polypeptide reads, in one-letter code: MGSFVKEETSSLMTDFLEKCGGYAVVDGGFATELQRHGADINDPLWSAKCLITSPHLVTKVHLDYLESGANIIITASYQATIQGFVAKGLSVGEAENLLRRSVEITYEAREIFYNRCTKGSWDFAYAGKASRRPILVAASVGSYGAYLADGSEYSGIYGDSVSKETLKDFHRRRVQILAKSGADLIAFETIPNKLEAEAYADLLEEEDIDIPAWFSFTSKDGVSVPRGDSVVECAKVADSCKNVVAIGINCTAPRYIHALIISLRQMTRKPIVVYPNSGEVYDGLNKKWIKSEGESEEDFVSYVSKWRDAGASLFGGCCRTTPNTIRAIAKVLSDEPSAASKPKFGQ.

Residues 12 to 333 form the Hcy-binding domain; the sequence is LMTDFLEKCG…NTIRAIAKVL (322 aa). Zn(2+) is bound by residues Cys-251, Cys-318, and Cys-319.

In terms of assembly, monomer. Requires Zn(2+) as cofactor. In terms of tissue distribution, expressed predominantly in rosette leaves. Expressed in roots, cauline leaves and developing seeds.

It carries out the reaction S-methyl-L-methionine + L-homocysteine = 2 L-methionine + H(+). Functionally, catalyzes methyl transfer from S-methylmethionine (SMM) to adenosyl-L-homocysteine (AdoMet). SMM degradation (by HMT-1, HMT-2 and HMT-3) and biosynthesis (by MMT1) constitute the SMM cycle in plants, which is probably required to achieve short term control of AdoMet level. The chain is Homocysteine S-methyltransferase 3 (HMT3) from Arabidopsis thaliana (Mouse-ear cress).